The sequence spans 185 residues: Endoribonuclease YbeY (185 aa).

Zn(2+) contacts are provided by His135, His139, and His145.

This sequence belongs to the endoribonuclease YbeY family. Zn(2+) serves as cofactor.

The protein localises to the cytoplasm. Functionally, single strand-specific metallo-endoribonuclease involved in late-stage 70S ribosome quality control and in maturation of the 3' terminus of the 16S rRNA. The chain is Endoribonuclease YbeY from Parasynechococcus marenigrum (strain WH8102).